Here is a 129-residue protein sequence, read N- to C-terminus: Glycine cleavage system H protein (129 aa).

The 83-residue stretch at 24–106 (TYTVGITEHA…YAGGWIFKIK (83 aa)) folds into the Lipoyl-binding domain. Lys65 bears the N6-lipoyllysine mark.

It belongs to the GcvH family. The glycine cleavage system is composed of four proteins: P, T, L and H. (R)-lipoate serves as cofactor.

Functionally, the glycine cleavage system catalyzes the degradation of glycine. The H protein shuttles the methylamine group of glycine from the P protein to the T protein. The protein is Glycine cleavage system H protein of Escherichia coli O127:H6 (strain E2348/69 / EPEC).